Here is a 270-residue protein sequence, read N- to C-terminus: 3-phenylpropionate-dihydrodiol/cinnamic acid-dihydrodiol dehydrogenase (270 aa).

Residue 10–34 (FITGGGSGLGLALVERFIEEGAQVA) participates in NAD(+) binding. Position 143 (S143) interacts with substrate. Y156 functions as the Proton acceptor in the catalytic mechanism.

The protein belongs to the short-chain dehydrogenases/reductases (SDR) family.

It carries out the reaction 3-(cis-5,6-dihydroxycyclohexa-1,3-dien-1-yl)propanoate + NAD(+) = 3-(2,3-dihydroxyphenyl)propanoate + NADH + H(+). It catalyses the reaction (2E)-3-(cis-5,6-dihydroxycyclohexa-1,3-dien-1-yl)prop-2-enoate + NAD(+) = (2E)-3-(2,3-dihydroxyphenyl)prop-2-enoate + NADH + H(+). The protein operates within aromatic compound metabolism; 3-phenylpropanoate degradation. In terms of biological role, converts 3-phenylpropionate-dihydrodiol (PP-dihydrodiol) and cinnamic acid-dihydrodiol (CI-dihydrodiol) into 3-(2,3-dihydroxylphenyl)propanoic acid (DHPP) and 2,3-dihydroxicinnamic acid (DHCI), respectively. This chain is 3-phenylpropionate-dihydrodiol/cinnamic acid-dihydrodiol dehydrogenase, found in Escherichia coli (strain K12 / MC4100 / BW2952).